The primary structure comprises 131 residues: uncharacterized protein (131 aa).

The interval 16 to 71 (MSEQERDEVLEDDDDDEDNKSSQQERDEFVEDDDNNSIQSSPSCAQPLLTQYHDDG) is disordered. The segment covering 20 to 33 (ERDEVLEDDDDDED) has biased composition (acidic residues).

This is an uncharacterized protein from Dictyostelium discoideum (Social amoeba).